The chain runs to 25 residues: Caerin-1.19 (25 aa).

L25 carries the leucine amide modification.

This sequence belongs to the frog skin active peptide (FSAP) family. Caerin subfamily. As to expression, expressed by the skin dorsal glands.

The protein localises to the secreted. Caerin-1.19 shows significant activity against Gram-positive organisms, but is less effective against Gram-negative organisms. This Ranoidea gracilenta (Dainty green tree frog) protein is Caerin-1.19.